Here is a 363-residue protein sequence, read N- to C-terminus: Regulator of G-protein signaling rgs-3 (363 aa).

The interval Met1–Ser70 is disordered. The segment covering Leu21–Gln35 has biased composition (basic and acidic residues). Composition is skewed to low complexity over residues Ser36–Ser50 and Pro58–Ser70. RGS domains lie at Asn112–Leu225 and Ser240–Leu359.

Post-translationally, may be phosphorylated and activated by egl-4.

Modulates chemotaxis responses by regulating positively the sensitivity to CO2 levels in BAG neurons and by regulating negatively the sensitivity to quinine in ASH sensory neurons. This Caenorhabditis elegans protein is Regulator of G-protein signaling rgs-3 (rgs-3).